A 72-amino-acid chain; its full sequence is Translation initiation factor IF-1 (72 aa).

One can recognise an S1-like domain in the interval 1 to 72 (MSKDDSIEFE…TKGRITYRMK (72 aa)).

The protein belongs to the IF-1 family. Component of the 30S ribosomal translation pre-initiation complex which assembles on the 30S ribosome in the order IF-2 and IF-3, IF-1 and N-formylmethionyl-tRNA(fMet); mRNA recruitment can occur at any time during PIC assembly.

Its subcellular location is the cytoplasm. One of the essential components for the initiation of protein synthesis. Stabilizes the binding of IF-2 and IF-3 on the 30S subunit to which N-formylmethionyl-tRNA(fMet) subsequently binds. Helps modulate mRNA selection, yielding the 30S pre-initiation complex (PIC). Upon addition of the 50S ribosomal subunit IF-1, IF-2 and IF-3 are released leaving the mature 70S translation initiation complex. The chain is Translation initiation factor IF-1 from Xanthomonas campestris pv. campestris (strain 8004).